Reading from the N-terminus, the 117-residue chain is Ig heavy chain V region 1-72 (117 aa).

The N-terminal stretch at 1 to 19 (MGWSCIMLFLAATATGVHS) is a signal peptide. The interval 20–49 (QVQLQQPGAELVKPGASVKLSCKASGYTFT) is framework-1. Cysteine 41 and cysteine 115 form a disulfide bridge. The tract at residues 50 to 54 (SYWMH) is complementarity-determining-1. Residues 55-68 (WVKQRPGRGLEWIG) form a framework-2 region. The segment at 69-85 (RIDPNSGGTKYNEKFKS) is complementarity-determining-2. The segment at 86–117 (KATLTVDKPSSTAYMQLSSLTSEDSAVYYCAR) is framework-3.

The chain is Ig heavy chain V region 1-72 from Mus musculus (Mouse).